Reading from the N-terminus, the 513-residue chain is Xylose import ATP-binding protein XylG (513 aa).

ABC transporter domains lie at 5-242 and 259-505; these read LEMK…VGRE and LRIE…LRSE. 37–44 is a binding site for ATP; it reads GENGSGKS.

It belongs to the ABC transporter superfamily. Xylose importer (TC 3.A.1.2.4) family. In terms of assembly, the complex is composed of two ATP-binding proteins (XylG), two transmembrane proteins (XylH) and a solute-binding protein (XylF).

Its subcellular location is the cell inner membrane. It catalyses the reaction D-xylose(out) + ATP + H2O = D-xylose(in) + ADP + phosphate + H(+). Part of the ABC transporter complex XylFGH involved in xylose import. Responsible for energy coupling to the transport system. This Shigella flexneri serotype 5b (strain 8401) protein is Xylose import ATP-binding protein XylG.